The sequence spans 360 residues: SPRY domain-containing SOCS box protein 3 (360 aa).

Residues 21–54 (DQDGRSPALHAEEEAWGYDSDGQHSNSDSDTDLL) form a disordered region. The 191-residue stretch at 84 to 274 (SLHPFRQIKS…MKVIRSCCCR (191 aa)) folds into the B30.2/SPRY domain. Positions 264–315 (SMKVIRSCCCRTSLQYLCCARLRQLLPGSVDSLEVLPLPPGLKQVLSNKLGW) constitute an SOCS box domain. Positions 322–350 (NRSSQHKGDGSATTSCGSYSDSSCTPGHD) are disordered. Residues 332–346 (SATTSCGSYSDSSCT) show a composition bias toward polar residues.

It belongs to the SPSB family. Substrate-recognition component of the ECS(SPSB3) complex, composed of spsb3, cul5, elob, elob and rnf7/rbx2.

The protein localises to the nucleus. The protein operates within protein modification; protein ubiquitination. Functionally, substrate-recognition component of a cullin-5-RING E3 ubiquitin-protein ligase complex (ECS complex, also named CRL5 complex), which mediates the ubiquitination and subsequent proteasomal degradation of target proteins. In Xenopus laevis (African clawed frog), this protein is SPRY domain-containing SOCS box protein 3 (spsb3).